A 235-amino-acid chain; its full sequence is Ribosomal RNA small subunit methyltransferase G (235 aa).

Residues Gly98, Met103, 149-150, and Arg164 each bind S-adenosyl-L-methionine; that span reads VE.

Belongs to the methyltransferase superfamily. RNA methyltransferase RsmG family.

It is found in the cytoplasm. It catalyses the reaction guanosine(527) in 16S rRNA + S-adenosyl-L-methionine = N(7)-methylguanosine(527) in 16S rRNA + S-adenosyl-L-homocysteine. Its function is as follows. Specifically methylates the N7 position of guanine in position 527 of 16S rRNA. The sequence is that of Ribosomal RNA small subunit methyltransferase G from Cupriavidus metallidurans (strain ATCC 43123 / DSM 2839 / NBRC 102507 / CH34) (Ralstonia metallidurans).